Here is a 1630-residue protein sequence, read N- to C-terminus: Merozoite surface protein 1 (1630 aa).

Residues 1 to 19 (MKIIFFLCSFLFFIINTQC) form the signal peptide. The disordered stretch occupies residues 60–113 (TKGASAQSGTSGTSGTSGPSGPSGTSPSSRSNTLPRSNTSSGASPPADASDSDA). The tract at residues 67–84 (SGTSGTSGTSGPSGPSGT) is tripeptide SG(TP) repeat. The span at 67 to 88 (SGTSGTSGTSGPSGPSGTSPSS) shows a compositional bias: low complexity. The segment covering 89–98 (RSNTLPRSNT) has biased composition (polar residues). The N-linked (GlcNAc...) asparagine glycan is linked to Asn-97. The span at 99 to 108 (SSGASPPADA) shows a compositional bias: low complexity. N-linked (GlcNAc...) asparagine glycosylation occurs at Asn-259. The disordered stretch occupies residues 680 to 755 (KKNIKTEGQS…VPTPPAPVNN (76 aa)). Polar residues-rich tracts occupy residues 685–695 (TEGQSDNSEPS) and 702–713 (GQATTKPGQQAG). A compositionally biased stretch (low complexity) spans 721 to 732 (VQAQAQEQKQAQ). Asn-755, Asn-759, Asn-774, and Asn-835 each carry an N-linked (GlcNAc...) asparagine glycan. A disordered region spans residues 884–906 (SMQPLSLTPQDKPEVSANDDTSH). Asn-911, Asn-955, Asn-1049, Asn-1156, and Asn-1165 each carry an N-linked (GlcNAc...) asparagine glycan. Positions 993 to 1107 (QLSFDLYNKY…EESIQTEDNY (115 aa)) are required for binding to host erythrocyte cell membrane. Residues 1190-1203 (VSESGSDTLEQSQP) show a composition bias toward polar residues. Residues 1190-1220 (VSESGSDTLEQSQPKKPASTHVGAESNTITT) are disordered. N-linked (GlcNAc...) asparagine glycans are attached at residues Asn-1436 and Asn-1517. EGF-like domains follow at residues 1521–1561 (HQCV…VENP) and 1562–1610 (NPTC…FCSS). Disulfide bonds link Cys-1523/Cys-1534, Cys-1528/Cys-1544, Cys-1546/Cys-1557, Cys-1565/Cys-1578, Cys-1572/Cys-1592, and Cys-1594/Cys-1608. Residue Ser-1609 is the site of GPI-anchor amidated serine attachment. The propeptide at 1610–1630 (SSNFLGISFLLILMLILYSFI) is removed in mature form.

As to quaternary structure, forms a complex composed of subunits p83, p30, p38, and p42 which remain non-covalently associated; the complex is formed at the merozoite surface prior to egress from host erythrocytes. Forms a complex composed of processed MSP1 subunits, MSP6 subunit p36 and MSP7; the complex is formed at the merozoite surface prior to egress from host erythrocytes. Within the complex, interacts (via subunit p38) with MSP6 subunit p36 and (via subunits p83, p30 and p38) with MSP7 (via subunit p22). Forms a complex composed of MSP1, MSP6, DBLMSP1 and DBLMSP2. Within the complex, interacts (via subunit p38) with DBLMSP1 and DBLMSP2. Forms a complex composed of MSP1, and rhoptry proteins RhopH3, RAP1 and CLAG9/RhopH3. Within the complex, interacts (via subunits p42 and p19) with RhopH3 (via C-terminus). Forms a complex composed of MSP1, MSP6, MSP7, MSP9 and MSP3; within the complex, MSP6 and MSP9 mediate the binding to the host erythrocyte. Interacts (via subunits p19 and p42) with MSP9; the interaction is direct; MSP1 subunits p19 or p42, and MSP9 form a co-ligand complex that interacts with host SLC4A1/Band 3 protein. May interact with PFD6. Interacts with host spectrin. Interacts with host glycophorin GYPA in a sialic acid-independent manner. In terms of assembly, interacts with host proinflammatory cytokine S100P; the interaction blocks S100P inflammatory and chemotactic activities. As to quaternary structure, interacts with host SLC4A1/Band 3 (via 5ABC region) on the host erythrocyte surface in a sialic acid-independent manner. In terms of processing, the p190 precursor is cleaved by SUB1 prior to merozoite egress into 4 subunits p83, p30, p38, and p42 which remain non-covalently associated. SUB1-mediated proteolytic cleavage occurs in an orderly manner; the first cleavage occurs at the p83/p30 site, followed by cleavage at the p30/p38 site, the last cleavage occurs at the p38/p42 site. The order of cleavage is essential for parasite viability. SUB1-mediated processing is essential for merozoite egress. In a second processing step during erythrocyte invasion, p42 is cleaved by SUB2 into p33 and p19; the latter remains attached to the merozoite surface via its GPI-anchor and stays on the surface during the subsequent ring stage.

It is found in the cell membrane. The protein resides in the secreted. Its subcellular location is the vacuole membrane. During the asexual blood stage, involved in merozoite egress from host erythrocytes possibly via its interaction with the host cytoskeleton protein spectrin resulting in the destabilization of the host cytoskeleton and thus leading to erythrocyte cell membrane rupture. Involved in the binding to host erythrocytes and is required for host erythrocyte invasion. In terms of biological role, by binding to host proinflammatory cytokine S100P may interfere with host immune responses. Its function is as follows. Involved in merozoite invasion of host erythrocytes. May play a role in the biogenesis and/or function of the food vacuole during the intraerythrocytic development. In Plasmodium falciparum (isolate K1 / Thailand), this protein is Merozoite surface protein 1.